A 198-amino-acid chain; its full sequence is Large ribosomal subunit protein bL9 (198 aa).

It belongs to the bacterial ribosomal protein bL9 family.

In terms of biological role, binds to the 23S rRNA. The polypeptide is Large ribosomal subunit protein bL9 (Bartonella tribocorum (strain CIP 105476 / IBS 506)).